We begin with the raw amino-acid sequence, 236 residues long: Virion protein US10 homolog (236 aa).

The tract at residues 1 to 32 (MDGAYGHVHNGSPMAVDGEESGAGTGTGAGAD) is disordered. The segment covering 21-31 (SGAGTGTGAGA) has biased composition (gly residues). A zinc finger lies at 138-150 (CAYWCCLGHAFAC).

This sequence belongs to the herpesviridae US10 family. Post-translationally, phosphorylated.

The protein resides in the virion tegument. The protein localises to the host nucleus matrix. The chain is Virion protein US10 homolog from Equine herpesvirus 1 (strain Ab4p) (EHV-1).